Reading from the N-terminus, the 676-residue chain is F420-dependent formate dehydrogenase 2 subunit alpha (676 aa).

The 4Fe-4S Mo/W bis-MGD-type domain occupies 4 to 60 (FKVVHTICPYCGTGCGIDLVVKDGKVVDSHPFKRHPVNEGKVCIKGNYCYEFVHSED). [4Fe-4S] cluster-binding residues include Cys11, Cys14, Cys18, and Cys46. A non-standard amino acid (selenocysteine) is located at residue Sec133.

This sequence belongs to the prokaryotic molybdopterin-containing oxidoreductase family. As to quaternary structure, dimer of an alpha (FdhA2) and a beta (FdhB2) subunit. [4Fe-4S] cluster is required as a cofactor. Requires Mo-bis(molybdopterin guanine dinucleotide) as cofactor. It depends on Zn(2+) as a cofactor.

It carries out the reaction oxidized coenzyme F420-(gamma-L-Glu)(n) + formate + 2 H(+) = reduced coenzyme F420-(gamma-L-Glu)(n) + CO2. Catalyzes the oxidation of formate to carbon dioxide, with coenzyme F420 as the electron acceptor. In vitro can also use methyl viologen as electron acceptor. In Methanococcus maripaludis (strain DSM 14266 / JCM 13030 / NBRC 101832 / S2 / LL), this protein is F420-dependent formate dehydrogenase 2 subunit alpha.